Consider the following 69-residue polypeptide: Amphipathic peptide CT2 (69 aa).

The first 23 residues, methionine 1–alanine 23, serve as a signal peptide directing secretion. Phenylalanine 36 carries the phenylalanine amide modification. A propeptide spanning residues glycine 40–arginine 69 is cleaved from the precursor.

Belongs to the non-disulfide-bridged peptide (NDBP) superfamily. Short antimicrobial peptide (group 4) family. In terms of tissue distribution, expressed by the venom gland.

It is found in the secreted. Its subcellular location is the target cell membrane. In terms of biological role, amphipathic peptide that shows antibacterial activities against both Gram-positive (MIC=10 uM, 20 uM and 20 uM against S.aureus, B.subtilis and S.agalactiae, respectively) and Gram-negative bacteria (MIC=20 uM, 10 uM, and 10 uM against E.coli, S.typhi, and P.aeruginosa, respectively). Is mildly hemolytic at its MIC range, but shows a strong cytotoxic activity at higher concentrations, reaching 84% lysis at 50 uM. The protein is Amphipathic peptide CT2 of Vaejovis mexicanus smithi (Mexican scorpion).